We begin with the raw amino-acid sequence, 574 residues long: Proline--tRNA ligase (574 aa).

This sequence belongs to the class-II aminoacyl-tRNA synthetase family. ProS type 1 subfamily. As to quaternary structure, homodimer.

The protein resides in the cytoplasm. It catalyses the reaction tRNA(Pro) + L-proline + ATP = L-prolyl-tRNA(Pro) + AMP + diphosphate. Catalyzes the attachment of proline to tRNA(Pro) in a two-step reaction: proline is first activated by ATP to form Pro-AMP and then transferred to the acceptor end of tRNA(Pro). As ProRS can inadvertently accommodate and process non-cognate amino acids such as alanine and cysteine, to avoid such errors it has two additional distinct editing activities against alanine. One activity is designated as 'pretransfer' editing and involves the tRNA(Pro)-independent hydrolysis of activated Ala-AMP. The other activity is designated 'posttransfer' editing and involves deacylation of mischarged Ala-tRNA(Pro). The misacylated Cys-tRNA(Pro) is not edited by ProRS. The chain is Proline--tRNA ligase from Nautilia profundicola (strain ATCC BAA-1463 / DSM 18972 / AmH).